Here is a 399-residue protein sequence, read N- to C-terminus: Succinate--CoA ligase [ADP-forming] subunit beta (399 aa).

The ATP-grasp domain occupies 9-254; it reads KAVLAEFGAP…ESEEDPKEIE (246 aa). ATP contacts are provided by residues K46, 53-55, E109, A112, and E117; that span reads GRG. 2 residues coordinate Mg(2+): N209 and D223. Residues N274 and 331-333 contribute to the substrate site; that span reads GIM.

It belongs to the succinate/malate CoA ligase beta subunit family. As to quaternary structure, heterotetramer of two alpha and two beta subunits. Mg(2+) is required as a cofactor.

The enzyme catalyses succinate + ATP + CoA = succinyl-CoA + ADP + phosphate. The catalysed reaction is GTP + succinate + CoA = succinyl-CoA + GDP + phosphate. It participates in carbohydrate metabolism; tricarboxylic acid cycle; succinate from succinyl-CoA (ligase route): step 1/1. Its function is as follows. Succinyl-CoA synthetase functions in the citric acid cycle (TCA), coupling the hydrolysis of succinyl-CoA to the synthesis of either ATP or GTP and thus represents the only step of substrate-level phosphorylation in the TCA. The beta subunit provides nucleotide specificity of the enzyme and binds the substrate succinate, while the binding sites for coenzyme A and phosphate are found in the alpha subunit. The sequence is that of Succinate--CoA ligase [ADP-forming] subunit beta from Caulobacter sp. (strain K31).